Reading from the N-terminus, the 1373-residue chain is DNA-directed RNA polymerase subunit beta (1373 aa).

Belongs to the RNA polymerase beta chain family. The RNAP catalytic core consists of 2 alpha, 1 beta, 1 beta' and 1 omega subunit. When a sigma factor is associated with the core the holoenzyme is formed, which can initiate transcription.

The catalysed reaction is RNA(n) + a ribonucleoside 5'-triphosphate = RNA(n+1) + diphosphate. DNA-dependent RNA polymerase catalyzes the transcription of DNA into RNA using the four ribonucleoside triphosphates as substrates. The protein is DNA-directed RNA polymerase subunit beta of Rickettsia rickettsii (strain Iowa).